We begin with the raw amino-acid sequence, 123 residues long: Small ribosomal subunit protein uS13 (123 aa).

A disordered region spans residues 97-123; it reads PVRGQKTKTNARTRKGPKKTVGRKKKK. Positions 101–123 are enriched in basic residues; that stretch reads QKTKTNARTRKGPKKTVGRKKKK.

Belongs to the universal ribosomal protein uS13 family. In terms of assembly, part of the 30S ribosomal subunit. Forms a loose heterodimer with protein S19. Forms two bridges to the 50S subunit in the 70S ribosome.

Its function is as follows. Located at the top of the head of the 30S subunit, it contacts several helices of the 16S rRNA. In the 70S ribosome it contacts the 23S rRNA (bridge B1a) and protein L5 of the 50S subunit (bridge B1b), connecting the 2 subunits; these bridges are implicated in subunit movement. Contacts the tRNAs in the A and P-sites. The protein is Small ribosomal subunit protein uS13 of Alkaliphilus oremlandii (strain OhILAs) (Clostridium oremlandii (strain OhILAs)).